We begin with the raw amino-acid sequence, 917 residues long: Isoleucine--tRNA ligase (917 aa).

Residues 57–67 carry the 'HIGH' region motif; the sequence is PYANGNLHMGH. Glu554 contacts L-isoleucyl-5'-AMP. The 'KMSKS' region motif lies at 595–599; it reads KMSKS. Lys598 provides a ligand contact to ATP. Zn(2+)-binding residues include Cys886, Cys889, Cys906, and Cys909.

Belongs to the class-I aminoacyl-tRNA synthetase family. IleS type 1 subfamily. Monomer. Requires Zn(2+) as cofactor.

Its subcellular location is the cytoplasm. The catalysed reaction is tRNA(Ile) + L-isoleucine + ATP = L-isoleucyl-tRNA(Ile) + AMP + diphosphate. Its function is as follows. Catalyzes the attachment of isoleucine to tRNA(Ile). As IleRS can inadvertently accommodate and process structurally similar amino acids such as valine, to avoid such errors it has two additional distinct tRNA(Ile)-dependent editing activities. One activity is designated as 'pretransfer' editing and involves the hydrolysis of activated Val-AMP. The other activity is designated 'posttransfer' editing and involves deacylation of mischarged Val-tRNA(Ile). The chain is Isoleucine--tRNA ligase from Staphylococcus aureus (strain Mu3 / ATCC 700698).